A 447-amino-acid chain; its full sequence is Rab GDP dissociation inhibitor alpha (447 aa).

The protein belongs to the Rab GDI family. In terms of assembly, interacts with RHOH. Interacts with the non-phosphorylated forms of RAB1A, RAB3A, RAB5A, RAB5B, RAB5C, RAB8A, RAB8B, RAB10, RAB12, RAB35, and RAB43.

It localises to the cytoplasm. Its subcellular location is the golgi apparatus. It is found in the trans-Golgi network. In terms of biological role, regulates the GDP/GTP exchange reaction of most Rab proteins by inhibiting the dissociation of GDP from them, and the subsequent binding of GTP to them. Promotes the dissociation of GDP-bound Rab proteins from the membrane and inhibits their activation. Promotes the dissociation of RAB1A, RAB3A, RAB5A and RAB10 from membranes. The sequence is that of Rab GDP dissociation inhibitor alpha (GDI1) from Macaca fascicularis (Crab-eating macaque).